A 606-amino-acid chain; its full sequence is Phosphogluconate dehydratase (606 aa).

The [4Fe-4S] cluster site is built by Cys156 and Cys223.

The protein belongs to the IlvD/Edd family. It depends on [4Fe-4S] cluster as a cofactor.

It carries out the reaction 6-phospho-D-gluconate = 2-dehydro-3-deoxy-6-phospho-D-gluconate + H2O. Its pathway is carbohydrate metabolism; Entner-Doudoroff pathway. Its function is as follows. Catalyzes the dehydration of 6-phospho-D-gluconate to 2-dehydro-3-deoxy-6-phospho-D-gluconate. The polypeptide is Phosphogluconate dehydratase (Rhizobium meliloti (strain 1021) (Ensifer meliloti)).